The primary structure comprises 207 residues: 8-oxoguanine DNA glycosylase/AP lyase (207 aa).

Active-site residues include Lys128 and Asp146.

Belongs to the type-2 OGG1 family.

The catalysed reaction is 2'-deoxyribonucleotide-(2'-deoxyribose 5'-phosphate)-2'-deoxyribonucleotide-DNA = a 3'-end 2'-deoxyribonucleotide-(2,3-dehydro-2,3-deoxyribose 5'-phosphate)-DNA + a 5'-end 5'-phospho-2'-deoxyribonucleoside-DNA + H(+). Catalyzes the excision of an oxidatively damaged form of guanine (7,8-dihydro-8-oxoguanine = 8-oxoG) from DNA. Also cleaves the DNA backbone at apurinic/apyrimidinic sites (AP sites). The sequence is that of 8-oxoguanine DNA glycosylase/AP lyase from Saccharolobus islandicus (strain L.S.2.15 / Lassen #1) (Sulfolobus islandicus).